A 187-amino-acid polypeptide reads, in one-letter code: V-type ATP synthase subunit E (187 aa).

Belongs to the V-ATPase E subunit family.

In terms of biological role, produces ATP from ADP in the presence of a proton gradient across the membrane. In Geotalea uraniireducens (strain Rf4) (Geobacter uraniireducens), this protein is V-type ATP synthase subunit E.